Reading from the N-terminus, the 415-residue chain is Gamma-glutamyl phosphate reductase (415 aa).

The protein belongs to the gamma-glutamyl phosphate reductase family.

Its subcellular location is the cytoplasm. It carries out the reaction L-glutamate 5-semialdehyde + phosphate + NADP(+) = L-glutamyl 5-phosphate + NADPH + H(+). It participates in amino-acid biosynthesis; L-proline biosynthesis; L-glutamate 5-semialdehyde from L-glutamate: step 2/2. Catalyzes the NADPH-dependent reduction of L-glutamate 5-phosphate into L-glutamate 5-semialdehyde and phosphate. The product spontaneously undergoes cyclization to form 1-pyrroline-5-carboxylate. This chain is Gamma-glutamyl phosphate reductase, found in Listeria monocytogenes serovar 1/2a (strain ATCC BAA-679 / EGD-e).